We begin with the raw amino-acid sequence, 726 residues long: F-box protein COS111 (726 aa).

The 52-residue stretch at 143–194 folds into the F-box domain; it reads FADINCLPEEIICRIIANLNDADSQRNCLLVSQEWSECAKRIIYKDVKFTST. The segment at 276–295 is disordered; it reads RSRTRRSSDASSMNSSVFSH. The span at 284–295 shows a compositional bias: low complexity; sequence DASSMNSSVFSH.

Functionally, F-box protein probably involved in ubiquitin conjugation pathway. The polypeptide is F-box protein COS111 (COS111) (Kluyveromyces lactis (strain ATCC 8585 / CBS 2359 / DSM 70799 / NBRC 1267 / NRRL Y-1140 / WM37) (Yeast)).